The primary structure comprises 823 residues: Molybdenum cofactor sulfurase (823 aa).

N6-(pyridoxal phosphate)lysine is present on lysine 228. Residue cysteine 392 is part of the active site. The segment at 628–667 (SSTRLAEPRRGLGSRKSPLRPAMPGAFPQDTPTPEAERNP) is disordered. Residues 644–819 (SPLRPAMPGA…VMVGDVVTPS (176 aa)) form the MOSC domain.

It belongs to the class-V pyridoxal-phosphate-dependent aminotransferase family. MOCOS subfamily. Requires pyridoxal 5'-phosphate as cofactor.

It carries out the reaction Mo-molybdopterin + L-cysteine + AH2 = thio-Mo-molybdopterin + L-alanine + A + H2O. The protein operates within cofactor biosynthesis; molybdopterin biosynthesis. Functionally, sulfurates the molybdenum cofactor. Sulfation of molybdenum is essential for xanthine dehydrogenase (XDH) and aldehyde oxidase (ADO) enzymes in which molybdenum cofactor is liganded by 1 oxygen and 1 sulfur atom in active form. In Aspergillus niger (strain ATCC MYA-4892 / CBS 513.88 / FGSC A1513), this protein is Molybdenum cofactor sulfurase.